Consider the following 166-residue polypeptide: Putative esterase sll0410 (166 aa).

The active site involves Asp-45.

Belongs to the 4-hydroxybenzoyl-CoA thioesterase family.

In Synechocystis sp. (strain ATCC 27184 / PCC 6803 / Kazusa), this protein is Putative esterase sll0410.